The chain runs to 151 residues: MKYQQLENLESGWKWAYLVKKHREGEAITRHIENSAAQDAVEQLMKLENEPVKVQEWIDAHMNVNLATRMKQTIRARRKRHFNAEHQHTRKKSIDLEFLVWQRLAVLARRRGNTLSDTVVQLIEDAERKEKYASQMSSLKQDLKDILDKEV.

The protein belongs to the MatP family. Homodimer.

It localises to the cytoplasm. In terms of biological role, required for spatial organization of the terminus region of the chromosome (Ter macrodomain) during the cell cycle. Prevents early segregation of duplicated Ter macrodomains during cell division. Binds specifically to matS, which is a 13 bp signature motif repeated within the Ter macrodomain. This chain is Macrodomain Ter protein, found in Yersinia pseudotuberculosis serotype IB (strain PB1/+).